Consider the following 374-residue polypeptide: Phenoloxidase-activating enzyme 1 (374 aa).

A signal peptide spans 1–19 (MWKSLVFFVSALIWSFGSS). Residues 20–120 (QDCTTPTGSR…QCGIDTTGDR (101 aa)) constitute a propeptide, activation peptide. Residues 21-74 (DCTTPTGSRSNCVSLYQCQPLYNAFEQRPLPTHVVSYLGRSQCGFEGYVPRVCC) enclose the Clip domain. 3 cysteine pairs are disulfide-bonded: cysteine 22–cysteine 73, cysteine 32–cysteine 63, and cysteine 38–cysteine 74. A compositionally biased stretch (polar residues) spans 83-97 (ATSARPTQAPTQGSS). Positions 83–114 (ATSARPTQAPTQGSSDVFPEDSSPAPRNQCGI) are disordered. One can recognise a Peptidase S1 domain in the interval 121–370 (VYGGTITDLD…YIDWIQNTIA (250 aa)). Cysteine 151 and cysteine 167 form a disulfide bridge. The active-site Charge relay system is the histidine 166. 2 residues coordinate Ca(2+): glutamate 186 and aspartate 194. The active-site Charge relay system is aspartate 228. Intrachain disulfides connect cysteine 292–cysteine 307 and cysteine 317–cysteine 346. The Charge relay system role is filled by serine 321.

The protein belongs to the peptidase S1 family. CLIP subfamily. Post-translationally, activated by the removal of the N-terminal inhibitory propeptide. Expressed in hemocytes.

It is found in the secreted. Its activity is regulated as follows. Inhibited by aprotenin. Not inhibited by EDTA, PMSF or leupeptin. Serine protease which, by cleaving and activating prophenoloxidase (PPO1) after immune challenge, plays an essential role in the melanization immune response to wounding. The protein is Phenoloxidase-activating enzyme 1 of Spodoptera litura (Asian cotton leafworm).